The sequence spans 348 residues: Nicotinate-nucleotide--dimethylbenzimidazole phosphoribosyltransferase (348 aa).

E316 serves as the catalytic Proton acceptor.

It belongs to the CobT family.

The enzyme catalyses 5,6-dimethylbenzimidazole + nicotinate beta-D-ribonucleotide = alpha-ribazole 5'-phosphate + nicotinate + H(+). It functions in the pathway nucleoside biosynthesis; alpha-ribazole biosynthesis; alpha-ribazole from 5,6-dimethylbenzimidazole: step 1/2. Functionally, catalyzes the synthesis of alpha-ribazole-5'-phosphate from nicotinate mononucleotide (NAMN) and 5,6-dimethylbenzimidazole (DMB). In Xanthomonas euvesicatoria pv. vesicatoria (strain 85-10) (Xanthomonas campestris pv. vesicatoria), this protein is Nicotinate-nucleotide--dimethylbenzimidazole phosphoribosyltransferase.